The following is a 140-amino-acid chain: Large ribosomal subunit protein uL11 (140 aa).

This sequence belongs to the universal ribosomal protein uL11 family. Part of the ribosomal stalk of the 50S ribosomal subunit. Interacts with L10 and the large rRNA to form the base of the stalk. L10 forms an elongated spine to which L12 dimers bind in a sequential fashion forming a multimeric L10(L12)X complex. In terms of processing, one or more lysine residues are methylated.

Functionally, forms part of the ribosomal stalk which helps the ribosome interact with GTP-bound translation factors. In Gemmatimonas aurantiaca (strain DSM 14586 / JCM 11422 / NBRC 100505 / T-27), this protein is Large ribosomal subunit protein uL11.